A 376-amino-acid polypeptide reads, in one-letter code: Ribonucleoside-diphosphate reductase 1 subunit beta (376 aa).

Fe cation is bound by residues Asp85, Glu116, and His119. Tyr123 is a catalytic residue. Fe cation contacts are provided by Glu205, Glu239, and His242.

Belongs to the ribonucleoside diphosphate reductase small chain family. As to quaternary structure, tetramer of two alpha (R1) and two beta (R2) subunits. The B1 protein is a dimer of alpha subunits. A radical transfer pathway occurs between Tyr-123 of R2 and R1. It depends on Fe cation as a cofactor.

The catalysed reaction is a 2'-deoxyribonucleoside 5'-diphosphate + [thioredoxin]-disulfide + H2O = a ribonucleoside 5'-diphosphate + [thioredoxin]-dithiol. In terms of biological role, provides the precursors necessary for DNA synthesis. Catalyzes the biosynthesis of deoxyribonucleotides from the corresponding ribonucleotides. R2 contains the tyrosyl radical required for catalysis. The sequence is that of Ribonucleoside-diphosphate reductase 1 subunit beta (nrdB) from Escherichia coli O157:H7.